Consider the following 273-residue polypeptide: MWKAGSMSAELGIGFALRAVNERVQQAVARRPRDLPAIQPRLVAVSKTKPADMVIEAYSHGQRTFGENYVQELLEKASNPQILSSCPEIKWHFIGHLQKQNVNKLMAVPNLSMLETVDSVKLADKVNSAWQKKGSPERLKVMVQINTSGEASKHGLPPAEMAALVEHINAKCPSLEFVGLMTIGSFGHDLSQGPNPDFQVLLSLREELCRKLGAPPEQVELSMGMSVDFQHAIEVGSTNVRIGSTIFGERDYSKKTDKPAAELQAPEEVAQAH.

Ser6 bears the Phosphoserine mark. Residue Lys47 is modified to N6-(pyridoxal phosphate)lysine. The residue at position 69 (Tyr69) is a Phosphotyrosine. At Lys125 the chain carries N6-succinyllysine. A phosphoserine mark is found at Ser226 and Ser244. Residues 251 to 260 (DYSKKTDKPA) are compositionally biased toward basic and acidic residues. The segment at 251-273 (DYSKKTDKPAAELQAPEEVAQAH) is disordered.

Belongs to the pyridoxal phosphate-binding protein YggS/PROSC family.

Pyridoxal 5'-phosphate (PLP)-binding protein, which may be involved in intracellular homeostatic regulation of pyridoxal 5'-phosphate (PLP), the active form of vitamin B6. This chain is Pyridoxal phosphate homeostasis protein, found in Bos taurus (Bovine).